Consider the following 484-residue polypeptide: Cobyric acid synthase (484 aa).

Residues 251 to 438 form the GATase cobBQ-type domain; that stretch reads ALKIAVPVLP…LHGLFASDAY (188 aa). The active-site Nucleophile is the Cys-333. The active site involves His-430.

The protein belongs to the CobB/CobQ family. CobQ subfamily.

It functions in the pathway cofactor biosynthesis; adenosylcobalamin biosynthesis. In terms of biological role, catalyzes amidations at positions B, D, E, and G on adenosylcobyrinic A,C-diamide. NH(2) groups are provided by glutamine, and one molecule of ATP is hydrogenolyzed for each amidation. In Rhizobium etli (strain CIAT 652), this protein is Cobyric acid synthase.